We begin with the raw amino-acid sequence, 365 residues long: UDP-N-acetylglucosamine--N-acetylmuramyl-(pentapeptide) pyrophosphoryl-undecaprenol N-acetylglucosamine transferase (365 aa).

UDP-N-acetyl-alpha-D-glucosamine is bound by residues 17-19 (TGG), N129, R167, S194, I250, 269-274 (ALTVSE), and Q295.

Belongs to the glycosyltransferase 28 family. MurG subfamily.

It is found in the cell inner membrane. It carries out the reaction di-trans,octa-cis-undecaprenyl diphospho-N-acetyl-alpha-D-muramoyl-L-alanyl-D-glutamyl-meso-2,6-diaminopimeloyl-D-alanyl-D-alanine + UDP-N-acetyl-alpha-D-glucosamine = di-trans,octa-cis-undecaprenyl diphospho-[N-acetyl-alpha-D-glucosaminyl-(1-&gt;4)]-N-acetyl-alpha-D-muramoyl-L-alanyl-D-glutamyl-meso-2,6-diaminopimeloyl-D-alanyl-D-alanine + UDP + H(+). Its pathway is cell wall biogenesis; peptidoglycan biosynthesis. Functionally, cell wall formation. Catalyzes the transfer of a GlcNAc subunit on undecaprenyl-pyrophosphoryl-MurNAc-pentapeptide (lipid intermediate I) to form undecaprenyl-pyrophosphoryl-MurNAc-(pentapeptide)GlcNAc (lipid intermediate II). The protein is UDP-N-acetylglucosamine--N-acetylmuramyl-(pentapeptide) pyrophosphoryl-undecaprenol N-acetylglucosamine transferase of Shewanella halifaxensis (strain HAW-EB4).